The following is a 30-amino-acid chain: GIPCGESCVFIPCLTTVAGCSCKNKVCYRN.

The segment at residues 1–30 is a cross-link (cyclopeptide (Gly-Asn)); the sequence is GIPCGESCVFIPCLTTVAGCSCKNKVCYRN. 3 cysteine pairs are disulfide-bonded: Cys4–Cys20, Cys8–Cys22, and Cys13–Cys27.

Post-translationally, this is a cyclic peptide.

In terms of biological role, probably participates in a plant defense mechanism. Has anti-HIV activity. This is Cycloviolin-C from Leonia cymosa (Sacha uba).